The primary structure comprises 453 residues: Anthocyanidin 3-O-glucosyltransferase (453 aa).

H17 acts as the Proton acceptor in catalysis. An an anthocyanidin-binding site is contributed by H17. The Charge relay role is filled by D117. A UDP-alpha-D-glucose-binding site is contributed by T139. H148 is a binding site for an anthocyanidin. The UDP-alpha-D-glucose site is built by A331, Q333, H348, W351, N352, S353, and E356. Residue G371 participates in an anthocyanidin binding. The UDP-alpha-D-glucose site is built by D372 and Q373.

The protein belongs to the UDP-glycosyltransferase family.

The enzyme catalyses an anthocyanidin + UDP-alpha-D-glucose + H(+) = an anthocyanidin 3-O-beta-D-glucoside + UDP. It catalyses the reaction delphinidin + UDP-alpha-D-glucose = delphinidin 3-O-beta-D-glucoside + UDP. It carries out the reaction pelargonidin + UDP-alpha-D-glucose = pelargonidin 3-O-beta-D-glucoside + UDP. The catalysed reaction is cyanidin + UDP-alpha-D-glucose = cyanidin 3-O-beta-D-glucoside + UDP + H(+). It participates in pigment biosynthesis; anthocyanin biosynthesis. In terms of biological role, in the presence of other necessary color factors, this glycosylation reaction allows the accumulation of anthocyanin pigments. Anthocyanidins are the preferred substrates, while flavonols are only a minor substrate in vitro. The chain is Anthocyanidin 3-O-glucosyltransferase from Gentiana triflora (Clustered gentian).